An 88-amino-acid polypeptide reads, in one-letter code: Apolipoprotein C-I (88 aa).

The N-terminal stretch at Met1 to Ala26 is a signal peptide.

This sequence belongs to the apolipoprotein C1 family.

The protein localises to the secreted. Inhibitor of lipoprotein binding to the low density lipoprotein (LDL) receptor, LDL receptor-related protein, and very low density lipoprotein (VLDL) receptor. Associates with high density lipoproteins (HDL) and the triacylglycerol-rich lipoproteins in the plasma and makes up about 10% of the protein of the VLDL and 2% of that of HDL. Appears to interfere directly with fatty acid uptake and is also the major plasma inhibitor of cholesteryl ester transfer protein (CETP). Binds free fatty acids and reduces their intracellular esterification. Modulates the interaction of APOE with beta-migrating VLDL and inhibits binding of beta-VLDL to the LDL receptor-related protein. The polypeptide is Apolipoprotein C-I (APOC1) (Leptonychotes weddellii (Weddell seal)).